A 204-amino-acid polypeptide reads, in one-letter code: Recombination protein RecR (204 aa).

The C4-type zinc finger occupies 63–78 (CNRCFNITVEDPCTIC). Residues 86–181 (RQVCVVEEPL…RVTRLARGLP (96 aa)) enclose the Toprim domain.

The protein belongs to the RecR family.

May play a role in DNA repair. It seems to be involved in an RecBC-independent recombinational process of DNA repair. It may act with RecF and RecO. The chain is Recombination protein RecR from Herpetosiphon aurantiacus (strain ATCC 23779 / DSM 785 / 114-95).